The sequence spans 284 residues: Bifunctional protein FolD (284 aa).

Residues 166 to 168 (GAS), Ser-191, and Ile-232 contribute to the NADP(+) site.

This sequence belongs to the tetrahydrofolate dehydrogenase/cyclohydrolase family. Homodimer.

It carries out the reaction (6R)-5,10-methylene-5,6,7,8-tetrahydrofolate + NADP(+) = (6R)-5,10-methenyltetrahydrofolate + NADPH. The enzyme catalyses (6R)-5,10-methenyltetrahydrofolate + H2O = (6R)-10-formyltetrahydrofolate + H(+). The protein operates within one-carbon metabolism; tetrahydrofolate interconversion. Its function is as follows. Catalyzes the oxidation of 5,10-methylenetetrahydrofolate to 5,10-methenyltetrahydrofolate and then the hydrolysis of 5,10-methenyltetrahydrofolate to 10-formyltetrahydrofolate. The protein is Bifunctional protein FolD of Neisseria meningitidis serogroup B (strain ATCC BAA-335 / MC58).